The sequence spans 65 residues: Large ribosomal subunit protein bL32 (65 aa).

It belongs to the bacterial ribosomal protein bL32 family.

The chain is Large ribosomal subunit protein bL32 from Phytoplasma australiense.